A 365-amino-acid polypeptide reads, in one-letter code: Cobalt-precorrin-5B C(1)-methyltransferase (365 aa).

It belongs to the CbiD family.

The enzyme catalyses Co-precorrin-5B + S-adenosyl-L-methionine = Co-precorrin-6A + S-adenosyl-L-homocysteine. Its pathway is cofactor biosynthesis; adenosylcobalamin biosynthesis; cob(II)yrinate a,c-diamide from sirohydrochlorin (anaerobic route): step 6/10. Catalyzes the methylation of C-1 in cobalt-precorrin-5B to form cobalt-precorrin-6A. This Variovorax paradoxus (strain S110) protein is Cobalt-precorrin-5B C(1)-methyltransferase.